The sequence spans 450 residues: GTPase Der (450 aa).

2 EngA-type G domains span residues 3–170 and 183–356; these read PTIA…LATG and LKIA…AECS. Residues 9–16, 56–60, 122–125, 189–196, 236–240, and 301–304 each bind GTP; these read GRPNVGKS, DTGGL, NKVD, GRPNAGKS, DTAGV, and NKID. The region spanning 357-441 is the KH-like domain; the sequence is LRISTGQLNR…PLNIVFRSTF (85 aa).

This sequence belongs to the TRAFAC class TrmE-Era-EngA-EngB-Septin-like GTPase superfamily. EngA (Der) GTPase family. Associates with the 50S ribosomal subunit.

Its function is as follows. GTPase that plays an essential role in the late steps of ribosome biogenesis. This Maridesulfovibrio salexigens (strain ATCC 14822 / DSM 2638 / NCIMB 8403 / VKM B-1763) (Desulfovibrio salexigens) protein is GTPase Der.